A 350-amino-acid chain; its full sequence is Anthranilate phosphoribosyltransferase (350 aa).

5-phospho-alpha-D-ribose 1-diphosphate-binding positions include Gly93, 96-97 (GD), Thr101, 103-106 (NIST), 121-129 (KHGNRSASG), and Ser133. Gly93 lines the anthranilate pocket. Ser105 lines the Mg(2+) pocket. Asn124 provides a ligand contact to anthranilate. Arg179 contributes to the anthranilate binding site. Mg(2+)-binding residues include Asp238 and Glu239.

This sequence belongs to the anthranilate phosphoribosyltransferase family. In terms of assembly, homodimer. Requires Mg(2+) as cofactor.

It carries out the reaction N-(5-phospho-beta-D-ribosyl)anthranilate + diphosphate = 5-phospho-alpha-D-ribose 1-diphosphate + anthranilate. It participates in amino-acid biosynthesis; L-tryptophan biosynthesis; L-tryptophan from chorismate: step 2/5. Its function is as follows. Catalyzes the transfer of the phosphoribosyl group of 5-phosphorylribose-1-pyrophosphate (PRPP) to anthranilate to yield N-(5'-phosphoribosyl)-anthranilate (PRA). The polypeptide is Anthranilate phosphoribosyltransferase (Parasynechococcus marenigrum (strain WH8102)).